Here is a 415-residue protein sequence, read N- to C-terminus: Multidrug resistance protein MdtA (415 aa).

A signal peptide spans 1-21 (MKGSYKSRWVIVIVVVIAAIA). Residues 31–47 (DSQSAAPGATKQAQQSP) show a composition bias toward polar residues. Disordered stretches follow at residues 31-56 (DSQSAAPGATKQAQQSPAGGRRGMRA) and 390-415 (VVETQSATTPEEKATSREYAKKGARS). Positions 399-415 (PEEKATSREYAKKGARS) are enriched in basic and acidic residues.

It belongs to the membrane fusion protein (MFP) (TC 8.A.1) family. Part of a tripartite efflux system composed of MdtA, MdtB and MdtC.

It localises to the cell inner membrane. Its function is as follows. The MdtABC tripartite complex confers resistance against novobiocin and deoxycholate. In Escherichia coli O6:H1 (strain CFT073 / ATCC 700928 / UPEC), this protein is Multidrug resistance protein MdtA.